We begin with the raw amino-acid sequence, 1059 residues long: Carbamoyl phosphate synthase large chain (1059 aa).

The interval 1–401 (MPKRKDIQKI…SLLKACRSLE (401 aa)) is carboxyphosphate synthetic domain. Arginine 129, arginine 169, glycine 175, glycine 176, arginine 208, isoleucine 210, glutamate 215, glycine 241, isoleucine 242, histidine 243, glutamine 284, and glutamate 298 together coordinate ATP. The 195-residue stretch at 133 to 327 (KQLMEELGQP…IAKLAAKIAV (195 aa)) folds into the ATP-grasp 1 domain. Residues glutamine 284, glutamate 298, and asparagine 300 each contribute to the Mg(2+) site. Glutamine 284, glutamate 298, and asparagine 300 together coordinate Mn(2+). The interval 402–546 (VGVDHNELPA…YSTYGFENES (145 aa)) is oligomerization domain. The carbamoyl phosphate synthetic domain stretch occupies residues 547–929 (VKSSKESVLV…ALYKAFEASY (383 aa)). The region spanning 671–861 (EQALKELDIP…MAQVATRLIL (191 aa)) is the ATP-grasp 2 domain. 10 residues coordinate ATP: arginine 707, serine 746, isoleucine 748, glutamate 752, glycine 777, valine 778, histidine 779, serine 780, glutamine 820, and glutamate 832. Mg(2+) is bound by residues glutamine 820, glutamate 832, and asparagine 834. Mn(2+) contacts are provided by glutamine 820, glutamate 832, and asparagine 834. The 130-residue stretch at 930-1059 (LHLPNFGNVV…ESRSFTTEAI (130 aa)) folds into the MGS-like domain. The interval 930–1059 (LHLPNFGNVV…ESRSFTTEAI (130 aa)) is allosteric domain.

The protein belongs to the CarB family. As to quaternary structure, composed of two chains; the small (or glutamine) chain promotes the hydrolysis of glutamine to ammonia, which is used by the large (or ammonia) chain to synthesize carbamoyl phosphate. Tetramer of heterodimers (alpha,beta)4. It depends on Mg(2+) as a cofactor. The cofactor is Mn(2+).

It catalyses the reaction hydrogencarbonate + L-glutamine + 2 ATP + H2O = carbamoyl phosphate + L-glutamate + 2 ADP + phosphate + 2 H(+). The catalysed reaction is hydrogencarbonate + NH4(+) + 2 ATP = carbamoyl phosphate + 2 ADP + phosphate + 2 H(+). Its pathway is amino-acid biosynthesis; L-arginine biosynthesis; carbamoyl phosphate from bicarbonate: step 1/1. It functions in the pathway pyrimidine metabolism; UMP biosynthesis via de novo pathway; (S)-dihydroorotate from bicarbonate: step 1/3. Large subunit of the glutamine-dependent carbamoyl phosphate synthetase (CPSase). CPSase catalyzes the formation of carbamoyl phosphate from the ammonia moiety of glutamine, carbonate, and phosphate donated by ATP, constituting the first step of 2 biosynthetic pathways, one leading to arginine and/or urea and the other to pyrimidine nucleotides. The large subunit (synthetase) binds the substrates ammonia (free or transferred from glutamine from the small subunit), hydrogencarbonate and ATP and carries out an ATP-coupled ligase reaction, activating hydrogencarbonate by forming carboxy phosphate which reacts with ammonia to form carbamoyl phosphate. This chain is Carbamoyl phosphate synthase large chain, found in Streptococcus gordonii (strain Challis / ATCC 35105 / BCRC 15272 / CH1 / DL1 / V288).